The sequence spans 273 residues: Pantothenate synthetase (273 aa).

27 to 34 (MGALHDGH) serves as a coordination point for ATP. The active-site Proton donor is histidine 34. Position 58 (glutamine 58) interacts with (R)-pantoate. Beta-alanine is bound at residue glutamine 58. 144 to 147 (GKKD) is an ATP binding site. Glutamine 150 is a binding site for (R)-pantoate. Residues valine 173 and 181 to 184 (LSSR) contribute to the ATP site.

Belongs to the pantothenate synthetase family. As to quaternary structure, homodimer.

The protein localises to the cytoplasm. The catalysed reaction is (R)-pantoate + beta-alanine + ATP = (R)-pantothenate + AMP + diphosphate + H(+). It functions in the pathway cofactor biosynthesis; (R)-pantothenate biosynthesis; (R)-pantothenate from (R)-pantoate and beta-alanine: step 1/1. Functionally, catalyzes the condensation of pantoate with beta-alanine in an ATP-dependent reaction via a pantoyl-adenylate intermediate. The protein is Pantothenate synthetase of Campylobacter concisus (strain 13826).